Here is a 358-residue protein sequence, read N- to C-terminus: Purine permease 2 (358 aa).

The next 10 helical transmembrane spans lie at 6 to 26 (VLVI…PLMM), 37 to 57 (IWFP…PLLL), 74 to 94 (FFLM…LVGF), 110 to 130 (TASL…FFMV), 134 to 154 (FTPF…VLAL), 170 to 190 (VVGF…LPLV), 209 to 229 (FQMV…LAAG), 262 to 282 (VIVF…GLIF), 288 to 308 (VSGI…VICF), and 312 to 332 (FQAG…SYFY). In terms of domain architecture, EamA spans 46–154 (VGCPLIFFPL…LTGGAVVLAL (109 aa)).

It belongs to the purine permeases (TC 2.A.7.14) family. In terms of tissue distribution, expressed in the vascular system of leaves. Restricted to the phloem. Expressed in flowers and roots and not detected in stems.

The protein localises to the membrane. Its activity is regulated as follows. Competitive inhibition of adenine transport by isopentenyladenine, kinetin, benzylaminopurine, trans- and cis-zeatin and trans-zeatin riboside. In terms of biological role, mediates adenine transport. May be involved in the uptake of cytokinin analogs. This is Purine permease 2 (PUP2) from Arabidopsis thaliana (Mouse-ear cress).